The following is a 250-amino-acid chain: Probable transcriptional regulatory protein Mmc1_0479 (250 aa).

It belongs to the TACO1 family.

It is found in the cytoplasm. In Magnetococcus marinus (strain ATCC BAA-1437 / JCM 17883 / MC-1), this protein is Probable transcriptional regulatory protein Mmc1_0479.